The following is a 310-amino-acid chain: Transcriptional regulator NRG1 (310 aa).

The segment at 85–131 (YYMGPPAQHRLPTPPPYPMSSPTTATAATPLSQQSPHLQPQQTLQQP) is disordered. The segment covering 104–131 (SSPTTATAATPLSQQSPHLQPQQTLQQP) has biased composition (low complexity). 2 consecutive C2H2-type zinc fingers follow at residues 228–250 (HVCK…NRIH) and 256–280 (HQCP…YKTH).

It localises to the nucleus. Its function is as follows. Transcriptional repressor that binds NRG1 response elements (NRE) of target promoters. Involved in regulation of chlamydospore formation, hyphal growth, virulence, and stress response. Plays a key role in regulating true hyphal growth, but does not regulate pseudohyphal growth in the same fashion. Directs transcriptional repression of a subset of filament-specific genes such as HWP1, HYR1, ALS8, HWP1, or ECE1; via the TUP1 pathway. Functions with UME6 in a negative feedback loop to control the level and duration of filament-specific gene expression in response to inducing conditions. Plays a key role in biofilm formation and dispersion. Also plays the role of a negative regulator of virulence in mice models. Required for the expression of the cell wall genes RBR1. This chain is Transcriptional regulator NRG1 (NRG1), found in Candida albicans (strain SC5314 / ATCC MYA-2876) (Yeast).